The sequence spans 741 residues: Homeobox protein AHox1 (741 aa).

Disordered regions lie at residues 1 to 30 (MEKMHSKSVSPVPFNNSNNTSLGGLRKSSS), 61 to 96 (KRRLLDPQNKKKQNRFERYSSSNHAQEQSSEENFCR), 146 to 183 (VNPLSKYFKPSSNDQLGARRTATSFSSSSEASDSKSCC), 203 to 226 (ADSDWSEDATGNEADDPDDHINQD), 357 to 383 (KTEESLRSPSETKQYSPDASTFYPIRT), 476 to 501 (FDFPPKFGSNNSSTDKPEQEDNNPQT), and 616 to 642 (QYGHMSSSQNPHSETQNRSEEVRGTVK). Residues 7 to 19 (KSVSPVPFNNSNN) show a composition bias toward low complexity. Over residues 63 to 78 (RLLDPQNKKKQNRFER) the composition is skewed to basic and acidic residues. The segment covering 79-92 (YSSSNHAQEQSSEE) has biased composition (polar residues). Positions 169-181 (SFSSSSEASDSKS) are enriched in low complexity. Residues 363–375 (RSPSETKQYSPDA) show a composition bias toward polar residues. Over residues 616–629 (QYGHMSSSQNPHSE) the composition is skewed to polar residues. The segment covering 630–639 (TQNRSEEVRG) has biased composition (basic and acidic residues). Positions 645-704 (RKWNRAVFSLMQRRGLEKSFQSQKYVAKPERRKLADALSLTDAQVKIWFQNRRMKWRQEI) form a DNA-binding region, homeobox. Residues 722-741 (EIEKEKTQTPSDEGEVINVD) are disordered.

This sequence belongs to the H2.0 homeobox family. Expressed in the tissues of endodermal origin.

Its subcellular location is the nucleus. This chain is Homeobox protein AHox1 (AHOX1), found in Halocynthia roretzi (Sea squirt).